We begin with the raw amino-acid sequence, 448 residues long: Probable glycine dehydrogenase (decarboxylating) subunit 1 (448 aa).

It belongs to the GcvP family. N-terminal subunit subfamily. As to quaternary structure, the glycine cleavage system is composed of four proteins: P, T, L and H. In this organism, the P 'protein' is a heterodimer of two subunits.

It carries out the reaction N(6)-[(R)-lipoyl]-L-lysyl-[glycine-cleavage complex H protein] + glycine + H(+) = N(6)-[(R)-S(8)-aminomethyldihydrolipoyl]-L-lysyl-[glycine-cleavage complex H protein] + CO2. The glycine cleavage system catalyzes the degradation of glycine. The P protein binds the alpha-amino group of glycine through its pyridoxal phosphate cofactor; CO(2) is released and the remaining methylamine moiety is then transferred to the lipoamide cofactor of the H protein. The sequence is that of Probable glycine dehydrogenase (decarboxylating) subunit 1 from Exiguobacterium sibiricum (strain DSM 17290 / CCUG 55495 / CIP 109462 / JCM 13490 / 255-15).